Here is a 239-residue protein sequence, read N- to C-terminus: uncharacterized protein (239 aa).

This is an uncharacterized protein from Homo sapiens (Human).